Reading from the N-terminus, the 108-residue chain is UPF0145 protein Tery_3795 (108 aa).

Belongs to the UPF0145 family.

The sequence is that of UPF0145 protein Tery_3795 from Trichodesmium erythraeum (strain IMS101).